The primary structure comprises 258 residues: C1q-related factor (258 aa).

Residues 1–16 (MLLVLVVLIPVLVSSG) form the signal peptide. The segment at 39 to 120 (GPGAGARSDG…PGSGGSGAIS (82 aa)) is disordered. The segment covering 67–77 (GPQGKPGRTGK) has biased composition (low complexity). The 49-residue stretch at 67 to 115 (GPQGKPGRTGKPGPPGPPGDRGPPGPVGPPGEKGEPGKPGPPGLPGSGG) folds into the Collagen-like domain. The segment covering 78–95 (PGPPGPPGDRGPPGPVGP) has biased composition (pro residues). Residues 125–258 (TTVPRVAFYA…TFSGFIIYSD (134 aa)) form the C1q domain.

Interacts with ADGRB3. Forms heterooligomers with C1QL4, when proteins are coexpressed; this interaction does not occur after secretion. As to expression, expressed in brainstem. More abundant in areas of the nervous system involved in motor function, such as the Purkinje cells of the cerebellum, the accessory olivary nucleus, the pons and the red nucleus.

Its subcellular location is the secreted. In terms of biological role, may regulate the number of excitatory synapses that are formed on hippocampus neurons. Has no effect on inhibitory synapses. In Mus musculus (Mouse), this protein is C1q-related factor (C1ql1).